A 366-amino-acid chain; its full sequence is DNA double-strand break repair protein Mre11 (366 aa).

4 residues coordinate Mn(2+): D8, H10, D49, and N84. H85 acts as the Proton donor in catalysis. Mn(2+)-binding residues include H158, H186, and H188.

The protein belongs to the MRE11/RAD32 family. As to quaternary structure, homodimer. Forms a heterotetramer composed of two Mre11 subunits and two Rad50 subunits. Requires Mn(2+) as cofactor.

With respect to regulation, nuclease activity is regulated by Rad50. Functionally, part of the Rad50/Mre11 complex, which is involved in the early steps of DNA double-strand break (DSB) repair. The complex may facilitate opening of the processed DNA ends to aid in the recruitment of HerA and NurA. Mre11 binds to DSB ends and has both double-stranded 3'-5' exonuclease activity and single-stranded endonuclease activity. The sequence is that of DNA double-strand break repair protein Mre11 from Methanocaldococcus jannaschii (strain ATCC 43067 / DSM 2661 / JAL-1 / JCM 10045 / NBRC 100440) (Methanococcus jannaschii).